Here is a 343-residue protein sequence, read N- to C-terminus: Methylthioribose-1-phosphate isomerase (343 aa).

Substrate-binding positions include 48–50, R88, and Q193; that span reads RGA. Residue D234 is the Proton donor of the active site. Position 244 to 245 (244 to 245) interacts with substrate; sequence NK.

Belongs to the eIF-2B alpha/beta/delta subunits family. MtnA subfamily.

It carries out the reaction 5-(methylsulfanyl)-alpha-D-ribose 1-phosphate = 5-(methylsulfanyl)-D-ribulose 1-phosphate. Its pathway is amino-acid biosynthesis; L-methionine biosynthesis via salvage pathway; L-methionine from S-methyl-5-thio-alpha-D-ribose 1-phosphate: step 1/6. Functionally, catalyzes the interconversion of methylthioribose-1-phosphate (MTR-1-P) into methylthioribulose-1-phosphate (MTRu-1-P). In Thermotoga petrophila (strain ATCC BAA-488 / DSM 13995 / JCM 10881 / RKU-1), this protein is Methylthioribose-1-phosphate isomerase.